Here is a 308-residue protein sequence, read N- to C-terminus: D-alanine--D-alanine ligase B (308 aa).

The ATP-grasp domain occupies 102–302; the sequence is KKIVKTVGVP…FGELLSWMVE (201 aa). 128 to 183 contributes to the ATP binding site; that stretch reads PMKPPYVIKPVNEGSSFGVVIVSEGQSHPPQVVGSSEWKYGDTVMVERYIHGRELT. Positions 252, 269, and 271 each coordinate Mg(2+).

Belongs to the D-alanine--D-alanine ligase family. It depends on Mg(2+) as a cofactor. Requires Mn(2+) as cofactor.

Its subcellular location is the cytoplasm. The catalysed reaction is 2 D-alanine + ATP = D-alanyl-D-alanine + ADP + phosphate + H(+). It participates in cell wall biogenesis; peptidoglycan biosynthesis. Functionally, cell wall formation. The chain is D-alanine--D-alanine ligase B from Mesorhizobium japonicum (strain LMG 29417 / CECT 9101 / MAFF 303099) (Mesorhizobium loti (strain MAFF 303099)).